A 486-amino-acid polypeptide reads, in one-letter code: MVKLVSLLDSLYGYKMIHEGNPDIHSIHMDSREVVEGGLFFCIKGYTVDGHDYAQQAVSNGAVAVVSERPLELSVPVVVVRDSRRAMAQVATKFYGEPTNDLQLIGVTGTNGKTTITHLIEKIMQDQGKMTGLIGTMYTKIGHELKETKNTTPESLVLQRTFADMKKSGVTTAMMEVSSHALQSGRVRGCDFDVAVFSNLTPDHLDYHGTMERYKFAKGLLFAQLGNTYQGKVAVLNADDPASADFAEMTIAQVVTYGIENEADFQAENVRITSTGTTFELAAFEERMELSIHLIGKFSVYNVLAAAAAAYVSGVPLQEIKKSLEEVKGVAGRFETVKHDQPFTVIVDYAHTPDSLENVLKTVGELAKGDVRVVVGCGGDRDKTKRPVMAEIATTFANQAIFTSDNPRSEEPMDILRDMEQGAKGDSYLMIEDRKEAIFKAIELAKEDDIIVIAGKGHETYQQFRDRTIDFDDRIVAQQAIKERWT.

Serine 31 contributes to the UDP-N-acetyl-alpha-D-muramoyl-L-alanyl-D-glutamate binding site. 109–115 (GTNGKTT) is an ATP binding site. UDP-N-acetyl-alpha-D-muramoyl-L-alanyl-D-glutamate is bound by residues asparagine 150, 151–152 (TT), serine 178, and arginine 186. Lysine 218 is subject to N6-carboxylysine. Meso-2,6-diaminopimelate contacts are provided by residues arginine 381, 405–408 (DNPR), glycine 455, and glutamate 459. Positions 405–408 (DNPR) match the Meso-diaminopimelate recognition motif motif.

The protein belongs to the MurCDEF family. MurE subfamily. It depends on Mg(2+) as a cofactor. Carboxylation is probably crucial for Mg(2+) binding and, consequently, for the gamma-phosphate positioning of ATP.

The protein resides in the cytoplasm. It catalyses the reaction UDP-N-acetyl-alpha-D-muramoyl-L-alanyl-D-glutamate + meso-2,6-diaminopimelate + ATP = UDP-N-acetyl-alpha-D-muramoyl-L-alanyl-gamma-D-glutamyl-meso-2,6-diaminopimelate + ADP + phosphate + H(+). It functions in the pathway cell wall biogenesis; peptidoglycan biosynthesis. Functionally, catalyzes the addition of meso-diaminopimelic acid to the nucleotide precursor UDP-N-acetylmuramoyl-L-alanyl-D-glutamate (UMAG) in the biosynthesis of bacterial cell-wall peptidoglycan. In Halalkalibacterium halodurans (strain ATCC BAA-125 / DSM 18197 / FERM 7344 / JCM 9153 / C-125) (Bacillus halodurans), this protein is UDP-N-acetylmuramoyl-L-alanyl-D-glutamate--2,6-diaminopimelate ligase.